The chain runs to 521 residues: GMP synthase [glutamine-hydrolyzing] (521 aa).

In terms of domain architecture, Glutamine amidotransferase type-1 spans 10–204 (SLLILDFGSQ…ALGICGCEND (195 aa)). C87 functions as the Nucleophile in the catalytic mechanism. Active-site residues include H178 and E180. Positions 205–396 (WNMHNFAEEQ…LGMPREMLMR (192 aa)) constitute a GMPS ATP-PPase domain. Position 232 to 238 (232 to 238 (SGGVDSS)) interacts with ATP.

As to quaternary structure, homodimer.

It catalyses the reaction XMP + L-glutamine + ATP + H2O = GMP + L-glutamate + AMP + diphosphate + 2 H(+). Its pathway is purine metabolism; GMP biosynthesis; GMP from XMP (L-Gln route): step 1/1. Functionally, catalyzes the synthesis of GMP from XMP. The sequence is that of GMP synthase [glutamine-hydrolyzing] from Wolinella succinogenes (strain ATCC 29543 / DSM 1740 / CCUG 13145 / JCM 31913 / LMG 7466 / NCTC 11488 / FDC 602W) (Vibrio succinogenes).